The sequence spans 196 residues: Pyridoxal 5'-phosphate synthase subunit PdxT (196 aa).

L-glutamine is bound at residue 47 to 49 (GES). Cys-79 functions as the Nucleophile in the catalytic mechanism. Residues Arg-106 and 134–135 (IR) contribute to the L-glutamine site. Active-site charge relay system residues include His-170 and Glu-172.

The protein belongs to the glutaminase PdxT/SNO family. As to quaternary structure, in the presence of PdxS, forms a dodecamer of heterodimers. Only shows activity in the heterodimer.

The catalysed reaction is aldehydo-D-ribose 5-phosphate + D-glyceraldehyde 3-phosphate + L-glutamine = pyridoxal 5'-phosphate + L-glutamate + phosphate + 3 H2O + H(+). It catalyses the reaction L-glutamine + H2O = L-glutamate + NH4(+). It functions in the pathway cofactor biosynthesis; pyridoxal 5'-phosphate biosynthesis. Functionally, catalyzes the hydrolysis of glutamine to glutamate and ammonia as part of the biosynthesis of pyridoxal 5'-phosphate. The resulting ammonia molecule is channeled to the active site of PdxS. The sequence is that of Pyridoxal 5'-phosphate synthase subunit PdxT from Bacillus anthracis (strain A0248).